A 438-amino-acid polypeptide reads, in one-letter code: Terminase, large subunit (438 aa).

A Walker A motif motif is present at residues 62-68; that stretch reads SRRVGKS. The Walker B motif motif lies at 150–155; the sequence is FIIFDE. Glu-155 (for ATPase activity) is an active-site residue. Residues Asp-286, Asp-342, and Asp-418 each coordinate Mg(2+).

It belongs to the Tequatrovirus large terminase family. Interacts with the terminase small subunit; the active complex is probably heterooligomeric. Interacts with the portal protein. It depends on Mg(2+) as a cofactor.

Its function is as follows. The terminase large subunit acts as an ATP driven molecular motor necessary for viral DNA translocation into empty capsids and as an endonuclease that cuts the viral genome to initiate and to end a packaging reaction The terminase lies at a unique vertex of the procapsid and is composed of two subunits, a small terminase subunit involved in viral DNA recognition (packaging sequence), and a large terminase subunit possessing endonucleolytic and ATPase activities. Both terminase subunits heterooligomerize and are docked on the portal protein to form the packaging machine. The terminase large subunit exhibits endonuclease activity and cleaves the viral genome concatemer. Direct long terminal repeats at each end of the genome are duplicated in concert with packaging. Once the capsid is packaged with the DNA, the terminase complex is substituted by the tail. This Escherichia phage T5 (Enterobacteria phage T5) protein is Terminase, large subunit.